The primary structure comprises 226 residues: uncharacterized protein (226 aa).

This sequence to L.innocua lin2408 and lin2600.

This is an uncharacterized protein from Listeria innocua serovar 6a (strain ATCC BAA-680 / CLIP 11262).